We begin with the raw amino-acid sequence, 562 residues long: MNERQQVASALQKVLPNLSVEDLEAKLERPKDAKNGDYAFPTFFLAKELHRAPQVIASELAEQIDQSGFERVVVAGPYINFFLDKASVGGEILAAVLADPANYGSTDLGHQGHVTIDLSSPNIAKPMGMGHLRSTVIGNAIANILAKVNYVPVRINHLGDWGTQFGKLMAAYEMWGDEAEVQKDPINTLQKYYVKINTEADEHPEYDDLGREWFAKLEQGDPEAQRLWKWFREVSLQRFMKIYNLLDIDFDSFNGEAFYNDKMDEVVTLLEDKQLLKESRGAEIIDLEKYDLNPAMIRKSDGSTLYLTRDLAAALFRKRMYHHAQSLYVVGAEQSNHFAQLKAVLSEMGFTWSDQIHHIPFGLMSLNGKKMSTRKGNIIQLEDVLNDSIKLARQQIEEKNPTLANADQVAEEVGVGAVIFHDLKNERTNSVDFKLEEVVKFEGETGPYVQYAHARAESILRKAGRPSFEGATLTVDGQEAWEVAKKIGQYQETIVRAANEYDPSLIGKYALSLAKSFNQYYAHTRILEEDDQKLSRLALVQAVSDVLKSALALLGVKAPDEM.

The short motif at 121–131 (PNIAKPMGMGH) is the 'HIGH' region element.

It belongs to the class-I aminoacyl-tRNA synthetase family. Monomer.

The protein resides in the cytoplasm. It carries out the reaction tRNA(Arg) + L-arginine + ATP = L-arginyl-tRNA(Arg) + AMP + diphosphate. This is Arginine--tRNA ligase from Limosilactobacillus fermentum (strain NBRC 3956 / LMG 18251) (Lactobacillus fermentum).